The chain runs to 226 residues: Urease accessory protein UreF (226 aa).

The protein belongs to the UreF family. As to quaternary structure, ureD, UreF and UreG form a complex that acts as a GTP-hydrolysis-dependent molecular chaperone, activating the urease apoprotein by helping to assemble the nickel containing metallocenter of UreC. The UreE protein probably delivers the nickel.

The protein resides in the cytoplasm. In terms of biological role, required for maturation of urease via the functional incorporation of the urease nickel metallocenter. In Burkholderia multivorans (strain ATCC 17616 / 249), this protein is Urease accessory protein UreF.